Here is a 120-residue protein sequence, read N- to C-terminus: Flagellar protein FliT (120 aa).

The segment at 1–50 (MERHQHLLSEYQQILTLSEQMLVLATEGNWDALVDLEMTYLKAVESTANI) is required for homodimerization. The interval 60 to 98 (LQDLLREKLRAILDNEIEIKRLLQLRLDRLSDLVGQSTK) is fliD binding.

It belongs to the FliT family. In terms of assembly, homodimer. Interacts with FliD and FlhC.

The protein localises to the cytoplasm. It is found in the cytosol. Dual-function protein that regulates the transcription of class 2 flagellar operons and that also acts as an export chaperone for the filament-capping protein FliD. As a transcriptional regulator, acts as an anti-FlhDC factor; it directly binds FlhC, thus inhibiting the binding of the FlhC/FlhD complex to class 2 promoters, resulting in decreased expression of class 2 flagellar operons. As a chaperone, effects FliD transition to the membrane by preventing its premature polymerization, and by directing it to the export apparatus. The sequence is that of Flagellar protein FliT from Yersinia enterocolitica serotype O:8 / biotype 1B (strain NCTC 13174 / 8081).